The primary structure comprises 131 residues: Hypocretin neuropeptide precursor (131 aa).

The first 33 residues, 1 to 33, serve as a signal peptide directing secretion; it reads MNPPFAKVSWATVTLLLLLLLLPPAVLSPGAAA. At glutamine 34 the chain carries Pyrrolidone carboxylic acid. 2 cysteine pairs are disulfide-bonded: cysteine 39-cysteine 45 and cysteine 40-cysteine 47. Leucine 66 bears the Leucine amide mark. A Methionine amide modification is found at methionine 97. Positions 98–131 are cleaved as a propeptide — removed in mature form; that stretch reads GRRAGAEPAPRLCPGRRCLAAAASSVAPGGRSGI.

It belongs to the orexin family. In terms of processing, specific enzymatic cleavages at paired basic residues yield the different active peptides.

It localises to the rough endoplasmic reticulum. The protein localises to the cytoplasmic vesicle. Its subcellular location is the synapse. Neuropeptides that play a significant role in the regulation of food intake and sleep-wakefulness, possibly by coordinating the complex behavioral and physiologic responses of these complementary homeostatic functions. A broader role in the homeostatic regulation of energy metabolism, autonomic function, hormonal balance and the regulation of body fluids, is also suggested. In terms of biological role, binds to orexin receptors HCRTR1/OX1R and HCRTR2/OX2R with a high affinity. Stimulates food intake. Modulates pituitary luteinizing hormone secretion in an ovarian steroid-dependent manner. Functionally, binds to orexin receptor HCRTR2/OX2R only. Stimulates food intake. Modulates pituitary luteinizing hormone secretion in an ovarian steroid-dependent manner. The polypeptide is Hypocretin neuropeptide precursor (HCRT) (Sus scrofa (Pig)).